The following is a 934-amino-acid chain: LPS-assembly protein LptD (934 aa).

Residues 1 to 33 (MALKSPAFRRKFPLLVTGGLLALQPFATSYVVA) form the signal peptide. Residues 52–86 (KSPVNNLPPRPVHDGAALTSGTEAPSAEAESADKP) are disordered.

Belongs to the LptD family. Component of the lipopolysaccharide transport and assembly complex. Interacts with LptE and LptA.

The protein localises to the cell outer membrane. Together with LptE, is involved in the assembly of lipopolysaccharide (LPS) at the surface of the outer membrane. The protein is LPS-assembly protein LptD of Pseudomonas putida (strain W619).